The following is a 182-amino-acid chain: Mesencephalic astrocyte-derived neurotrophic factor (182 aa).

The N-terminal stretch at 1–24 (MRRMWATQGLAVALALSVLPGSRA) is a signal peptide. Cystine bridges form between Cys30–Cys117, Cys33–Cys106, Cys64–Cys75, and Cys151–Cys154. The residue at position 76 (Tyr76) is a Phosphotyrosine. An interacts with ERN1, EIF2AK3 and ATF6 region spans residues 96–158 (LAHHIPVEKI…ETCKGCAEKS (63 aa)). The segment at 129–172 (TVDLKKLRVKELKKILDDWGETCKGCAEKSDYIRKINELMPKYA) is interacts with HSPA5.

This sequence belongs to the ARMET family. As to quaternary structure, interacts directly (via SAP domain) with HSPA5/BiP; the interaction inhibits ATP binding to HSPA5/BiP and subsequent nucleotide exchange. Component of a complex containing at least CRELD2, MANF, MATN3 and PDIA4. Interacts (via C-terminus) with ERN1 (via luminal domain); the interaction is decreased in the presence of increasing concentrations of Ca(2+). Post-translationally, may contain sialic acid residues.

The protein localises to the secreted. Its subcellular location is the endoplasmic reticulum lumen. The protein resides in the sarcoplasmic reticulum lumen. Functionally, selectively promotes the survival of dopaminergic neurons of the ventral mid-brain. Modulates GABAergic transmission to the dopaminergic neurons of the substantia nigra. Enhances spontaneous, as well as evoked, GABAergic inhibitory postsynaptic currents in dopaminergic neurons. Inhibits cell proliferation and endoplasmic reticulum (ER) stress-induced cell death. Retained in the ER/sarcoplasmic reticulum (SR) through association with the endoplasmic reticulum chaperone protein HSPA5 under normal conditions. Stabilizes HSPA5/BiP in its substrate-bound ADP state, which facilitates HSPA5/BiP incorporation into chaperone-client complexes during endoplasmic reticulum stress, its interaction with HSPA5/BiP inhibits ATP binding to HSPA5/BiP and subsequent nucleotide exchange. As a result acts as a repressor of the unfolded protein response (UPR) pathway. Up-regulated and secreted by the ER/SR in response to ER stress and hypoxia. Following secretion by the ER/SR, directly binds to 3-O-sulfogalactosylceramide, a lipid sulfatide in the outer cell membrane of target cells. Sulfatide binding promotes its cellular uptake by endocytosis, and is required for its role in alleviating ER stress and cell toxicity under hypoxic and ER stress conditions. Essential for embryonic lung development. Required for the correct postnatal temporal and structural development of splenic white pulp. Required for the repair-associated myeloid response in skeletal muscle, acts as a regulator of phenotypic transition towards prorepair macrophages in response to muscle injury and as a result limits excessive proinflammatory signaling. Represses RELA expression and therefore NF-kB signaling in the myocardium, as a result limits macrophage infiltration of injured tissue and M1 macrophage differentiation in response to myocardial injury. Required for endochondral ossification in long bones and the skull during postnatal development. The sequence is that of Mesencephalic astrocyte-derived neurotrophic factor from Homo sapiens (Human).